Here is a 334-residue protein sequence, read N- to C-terminus: Holliday junction branch migration complex subunit RuvB (334 aa).

The interval 1 to 179 (MTHKISVLHQ…FAFTGRVDYY (179 aa)) is large ATPase domain (RuvB-L). ATP contacts are provided by residues leucine 18, arginine 19, glycine 60, lysine 63, threonine 64, serine 65, 126-128 (EDF), arginine 169, tyrosine 179, and arginine 216. Residue threonine 64 coordinates Mg(2+). Positions 180–250 (TDEDLVSILS…VAEKALAMLL (71 aa)) are small ATPAse domain (RuvB-S). The segment at 253 to 334 (NLGLNEIDIK…RNPKDRWGEE (82 aa)) is head domain (RuvB-H). Arginine 308 and arginine 313 together coordinate DNA.

Belongs to the RuvB family. Homohexamer. Forms an RuvA(8)-RuvB(12)-Holliday junction (HJ) complex. HJ DNA is sandwiched between 2 RuvA tetramers; dsDNA enters through RuvA and exits via RuvB. An RuvB hexamer assembles on each DNA strand where it exits the tetramer. Each RuvB hexamer is contacted by two RuvA subunits (via domain III) on 2 adjacent RuvB subunits; this complex drives branch migration. In the full resolvosome a probable DNA-RuvA(4)-RuvB(12)-RuvC(2) complex forms which resolves the HJ.

Its subcellular location is the cytoplasm. It carries out the reaction ATP + H2O = ADP + phosphate + H(+). Its function is as follows. The RuvA-RuvB-RuvC complex processes Holliday junction (HJ) DNA during genetic recombination and DNA repair, while the RuvA-RuvB complex plays an important role in the rescue of blocked DNA replication forks via replication fork reversal (RFR). RuvA specifically binds to HJ cruciform DNA, conferring on it an open structure. The RuvB hexamer acts as an ATP-dependent pump, pulling dsDNA into and through the RuvAB complex. RuvB forms 2 homohexamers on either side of HJ DNA bound by 1 or 2 RuvA tetramers; 4 subunits per hexamer contact DNA at a time. Coordinated motions by a converter formed by DNA-disengaged RuvB subunits stimulates ATP hydrolysis and nucleotide exchange. Immobilization of the converter enables RuvB to convert the ATP-contained energy into a lever motion, pulling 2 nucleotides of DNA out of the RuvA tetramer per ATP hydrolyzed, thus driving DNA branch migration. The RuvB motors rotate together with the DNA substrate, which together with the progressing nucleotide cycle form the mechanistic basis for DNA recombination by continuous HJ branch migration. Branch migration allows RuvC to scan DNA until it finds its consensus sequence, where it cleaves and resolves cruciform DNA. This is Holliday junction branch migration complex subunit RuvB from Chlamydia trachomatis serovar A (strain ATCC VR-571B / DSM 19440 / HAR-13).